A 114-amino-acid polypeptide reads, in one-letter code: Nucleoid-associated protein THEYE_A1069 (114 aa).

It belongs to the YbaB/EbfC family. As to quaternary structure, homodimer.

The protein resides in the cytoplasm. It localises to the nucleoid. Binds to DNA and alters its conformation. May be involved in regulation of gene expression, nucleoid organization and DNA protection. In Thermodesulfovibrio yellowstonii (strain ATCC 51303 / DSM 11347 / YP87), this protein is Nucleoid-associated protein THEYE_A1069.